A 433-amino-acid polypeptide reads, in one-letter code: Enolase (433 aa).

Residue Q167 coordinates (2R)-2-phosphoglycerate. The Proton donor role is filled by E209. The Mg(2+) site is built by D246, E291, and D318. K343, R372, S373, and K394 together coordinate (2R)-2-phosphoglycerate. K343 acts as the Proton acceptor in catalysis.

Belongs to the enolase family. In terms of assembly, component of the RNA degradosome, a multiprotein complex involved in RNA processing and mRNA degradation. The cofactor is Mg(2+).

The protein resides in the cytoplasm. It localises to the secreted. The protein localises to the cell surface. The catalysed reaction is (2R)-2-phosphoglycerate = phosphoenolpyruvate + H2O. It functions in the pathway carbohydrate degradation; glycolysis; pyruvate from D-glyceraldehyde 3-phosphate: step 4/5. Its function is as follows. Catalyzes the reversible conversion of 2-phosphoglycerate (2-PG) into phosphoenolpyruvate (PEP). It is essential for the degradation of carbohydrates via glycolysis. This is Enolase from Hamiltonella defensa subsp. Acyrthosiphon pisum (strain 5AT).